A 335-amino-acid polypeptide reads, in one-letter code: uncharacterized protein (335 aa).

The protein belongs to the glycosyltransferase group 1 family. Glycosyltransferase 4 subfamily.

This is an uncharacterized protein from Sulfolobus islandicus rod-shaped virus 1 (SIRV-1).